The sequence spans 340 residues: L-threonine 3-dehydrogenase (340 aa).

Residue cysteine 38 participates in Zn(2+) binding. Residues threonine 40 and histidine 43 each act as charge relay system in the active site. Zn(2+) contacts are provided by histidine 63, glutamate 64, cysteine 93, cysteine 96, cysteine 99, and cysteine 107. NAD(+) is bound by residues isoleucine 175, aspartate 195, arginine 200, 261 to 263 (LGI), and 285 to 286 (IY).

This sequence belongs to the zinc-containing alcohol dehydrogenase family. Homotetramer. Requires Zn(2+) as cofactor.

The protein resides in the cytoplasm. The enzyme catalyses L-threonine + NAD(+) = (2S)-2-amino-3-oxobutanoate + NADH + H(+). The protein operates within amino-acid degradation; L-threonine degradation via oxydo-reductase pathway; glycine from L-threonine: step 1/2. In terms of biological role, catalyzes the NAD(+)-dependent oxidation of L-threonine to 2-amino-3-ketobutyrate. The polypeptide is L-threonine 3-dehydrogenase (Xanthomonas euvesicatoria pv. vesicatoria (strain 85-10) (Xanthomonas campestris pv. vesicatoria)).